The primary structure comprises 147 residues: Deoxyuridine 5'-triphosphate nucleotidohydrolase (147 aa).

Substrate contacts are provided by residues 63–65 (RSG), asparagine 76, and 80–82 (TID).

This sequence belongs to the dUTPase family. It depends on Mg(2+) as a cofactor.

It catalyses the reaction dUTP + H2O = dUMP + diphosphate + H(+). Its pathway is pyrimidine metabolism; dUMP biosynthesis; dUMP from dCTP (dUTP route): step 2/2. In terms of biological role, this enzyme is involved in nucleotide metabolism: it produces dUMP, the immediate precursor of thymidine nucleotides and it decreases the intracellular concentration of dUTP so that uracil cannot be incorporated into DNA. The protein is Deoxyuridine 5'-triphosphate nucleotidohydrolase of Chlamydia felis (strain Fe/C-56) (Chlamydophila felis).